We begin with the raw amino-acid sequence, 32 residues long: GCKKRKARKRPKCKKARKRPKCKRRKVAKKKC.

Positions 1–32 (GCKKRKARKRPKCKKARKRPKCKRRKVAKKKC) are disordered.

Testis.

The protein resides in the nucleus. It localises to the chromosome. Functionally, protamines substitute for histones in the chromatin of sperm during the haploid phase of spermatogenesis. They compact sperm DNA into a highly condensed, stable and inactive complex. This Scyliorhinus canicula (Small-spotted catshark) protein is Protamine S4.